A 109-amino-acid polypeptide reads, in one-letter code: uncharacterized protein (109 aa).

The segment at 1-26 (MTPRSLPRYGNSSRRKSFPMHRPSNV) is disordered.

This is an uncharacterized protein from Mycobacterium bovis (strain ATCC BAA-935 / AF2122/97).